Consider the following 121-residue polypeptide: Two-component response regulator ORR8 (121 aa).

In terms of domain architecture, Response regulatory spans 5–121; it reads HVLVVDDTHV…VDVPRIMKYI (117 aa). Position 55 is a 4-aspartylphosphate (Asp55).

It belongs to the ARR family. Type-A subfamily. In terms of processing, two-component system major event consists of a His-to-Asp phosphorelay between a sensor histidine kinase (HK) and a response regulator (RR). In plants, the His-to-Asp phosphorelay involves an additional intermediate named Histidine-containing phosphotransfer protein (HPt). This multistep phosphorelay consists of a His-Asp-His-Asp sequential transfer of a phosphate group between first a His and an Asp of the HK protein, followed by the transfer to a conserved His of the HPt protein and finally the transfer to an Asp in the receiver domain of the RR protein. As to expression, expressed in mature leaves, and at low levels in roots, shoots and flowers.

Functionally, functions as a response regulator involved in His-to-Asp phosphorelay signal transduction system. Phosphorylation of the Asp residue in the receiver domain activates the ability of the protein to promote the transcription of target genes. Type-A response regulators seem to act as negative regulators of the cytokinin signaling. This chain is Two-component response regulator ORR8, found in Oryza sativa subsp. indica (Rice).